Consider the following 253-residue polypeptide: Claudin domain-containing protein 1 (253 aa).

Residues 5–25 form a helical membrane-spanning segment; that stretch reads FATAFVIACVLSLISTIYMAA. Residues asparagine 42 and asparagine 72 are each glycosylated (N-linked (GlcNAc...) asparagine). 3 helical membrane-spanning segments follow: residues 141–161, 175–195, and 216–236; these read FLLP…GLCA, ILHL…VAGI, and FCLA…FIWA.

Belongs to the PMP-22/EMP/MP20 family. In terms of tissue distribution, widely distributed in the adult CNS with highest expression in the corpus callosum, caudate nucleus, cerebral cortex, medulla, putamen, spinal cord, substantia nigra and subthalamic nucleus. Weak expression was detected in the adult heart.

The protein localises to the cell junction. It is found in the tight junction. The protein resides in the cell membrane. In terms of biological role, plays a role in negatively regulating the permeability of cells to small molecules. The protein is Claudin domain-containing protein 1 (CLDND1) of Homo sapiens (Human).